The chain runs to 159 residues: Large ribosomal subunit protein mL50 (159 aa).

The protein belongs to the mitochondrion-specific ribosomal protein mL50 family. As to quaternary structure, component of the mitochondrial ribosome large subunit (39S) which comprises a 16S rRNA and about 50 distinct proteins.

Its subcellular location is the mitochondrion. The polypeptide is Large ribosomal subunit protein mL50 (MRPL50) (Bos taurus (Bovine)).